A 305-amino-acid polypeptide reads, in one-letter code: tRNA dimethylallyltransferase (305 aa).

8–15 (GPTAVGKT) serves as a coordination point for ATP. Position 10–15 (10–15 (TAVGKT)) interacts with substrate. Residues 33–36 (DSRQ) are interaction with substrate tRNA.

Belongs to the IPP transferase family. In terms of assembly, monomer. Mg(2+) serves as cofactor.

The catalysed reaction is adenosine(37) in tRNA + dimethylallyl diphosphate = N(6)-dimethylallyladenosine(37) in tRNA + diphosphate. Catalyzes the transfer of a dimethylallyl group onto the adenine at position 37 in tRNAs that read codons beginning with uridine, leading to the formation of N6-(dimethylallyl)adenosine (i(6)A). The sequence is that of tRNA dimethylallyltransferase from Thermotoga petrophila (strain ATCC BAA-488 / DSM 13995 / JCM 10881 / RKU-1).